The chain runs to 313 residues: Probable myosin light chain kinase DDB_G0292624 (313 aa).

The region spanning 6 to 264 (YELHKEIGKG…AKQALEHPWI (259 aa)) is the Protein kinase domain. ATP-binding positions include 12 to 20 (IGKGAFSVV) and Lys35. The active-site Proton acceptor is the Asp125.

Belongs to the protein kinase superfamily. CAMK Ser/Thr protein kinase family. CaMK subfamily.

The catalysed reaction is L-seryl-[myosin light chain] + ATP = O-phospho-L-seryl-[myosin light chain] + ADP + H(+). It carries out the reaction L-threonyl-[myosin light chain] + ATP = O-phospho-L-threonyl-[myosin light chain] + ADP + H(+). Does not have a calmodulin-binding domain. May phosphorylate a specific serine in the N-terminus of a myosin light chain. This is Probable myosin light chain kinase DDB_G0292624 from Dictyostelium discoideum (Social amoeba).